A 360-amino-acid chain; its full sequence is Phospho-N-acetylmuramoyl-pentapeptide-transferase (360 aa).

The next 10 helical transmembrane spans lie at 25–45 (RGIL…PWMI), 73–93 (TMGG…WADL), 97–117 (YVWV…VDDY), 134–154 (YFWQ…TAPT), 168–188 (LAIP…VGSS), 199–219 (GLAI…CYLS), 236–256 (AGEL…FLWF), 263–283 (VFMG…IAVI), 288–308 (VVLF…VIQV), and 338–358 (VIVR…ATLK).

The protein belongs to the glycosyltransferase 4 family. MraY subfamily. Requires Mg(2+) as cofactor.

The protein localises to the cell inner membrane. The catalysed reaction is UDP-N-acetyl-alpha-D-muramoyl-L-alanyl-gamma-D-glutamyl-meso-2,6-diaminopimeloyl-D-alanyl-D-alanine + di-trans,octa-cis-undecaprenyl phosphate = di-trans,octa-cis-undecaprenyl diphospho-N-acetyl-alpha-D-muramoyl-L-alanyl-D-glutamyl-meso-2,6-diaminopimeloyl-D-alanyl-D-alanine + UMP. Its pathway is cell wall biogenesis; peptidoglycan biosynthesis. Catalyzes the initial step of the lipid cycle reactions in the biosynthesis of the cell wall peptidoglycan: transfers peptidoglycan precursor phospho-MurNAc-pentapeptide from UDP-MurNAc-pentapeptide onto the lipid carrier undecaprenyl phosphate, yielding undecaprenyl-pyrophosphoryl-MurNAc-pentapeptide, known as lipid I. The chain is Phospho-N-acetylmuramoyl-pentapeptide-transferase from Pseudomonas entomophila (strain L48).